Here is a 363-residue protein sequence, read N- to C-terminus: FMNH(2)-dependent dimethylsulfone monooxygenase (363 aa).

Belongs to the SsuD family.

The catalysed reaction is dimethyl sulfone + FMNH2 + O2 = methanesulfinate + FMN + formaldehyde + H2O + 2 H(+). Functionally, involved in the dimethyl sulfide degradation pathway. Catalyzes the oxidation of dimethylsulfone (DMSO2) to yield methanesulfinate, which is oxidized spontaneously to methanesulfonate in the presence of dioxygen and FMNH(2). The polypeptide is FMNH(2)-dependent dimethylsulfone monooxygenase (Pseudomonas putida (Arthrobacter siderocapsulatus)).